Reading from the N-terminus, the 515-residue chain is 1-pyrroline-5-carboxylate dehydrogenase 1 (515 aa).

Active-site residues include Glu-286 and Cys-320.

This sequence belongs to the aldehyde dehydrogenase family. RocA subfamily.

It catalyses the reaction L-glutamate 5-semialdehyde + NAD(+) + H2O = L-glutamate + NADH + 2 H(+). The protein operates within amino-acid degradation; L-proline degradation into L-glutamate; L-glutamate from L-proline: step 2/2. In Halalkalibacterium halodurans (strain ATCC BAA-125 / DSM 18197 / FERM 7344 / JCM 9153 / C-125) (Bacillus halodurans), this protein is 1-pyrroline-5-carboxylate dehydrogenase 1 (rocA1).